The primary structure comprises 176 residues: ATP-dependent protease subunit HslV (176 aa).

The active site involves Thr-4. Residues Gly-158, Cys-161, and Thr-164 each coordinate Na(+).

The protein belongs to the peptidase T1B family. HslV subfamily. In terms of assembly, a double ring-shaped homohexamer of HslV is capped on each side by a ring-shaped HslU homohexamer. The assembly of the HslU/HslV complex is dependent on binding of ATP.

It localises to the cytoplasm. The catalysed reaction is ATP-dependent cleavage of peptide bonds with broad specificity.. With respect to regulation, allosterically activated by HslU binding. Functionally, protease subunit of a proteasome-like degradation complex believed to be a general protein degrading machinery. The chain is ATP-dependent protease subunit HslV from Rhizobium meliloti (strain 1021) (Ensifer meliloti).